The following is a 337-amino-acid chain: Anthranilate phosphoribosyltransferase (337 aa).

5-phospho-alpha-D-ribose 1-diphosphate is bound by residues Gly-82, 85–86 (GD), Thr-90, 92–95 (NIST), 110–118 (KHGGRSVSS), and Ser-122. Gly-82 provides a ligand contact to anthranilate. Ser-94 serves as a coordination point for Mg(2+). Arg-168 provides a ligand contact to anthranilate. Residues Asp-226 and Glu-227 each contribute to the Mg(2+) site.

The protein belongs to the anthranilate phosphoribosyltransferase family. Homodimer. Mg(2+) is required as a cofactor.

It carries out the reaction N-(5-phospho-beta-D-ribosyl)anthranilate + diphosphate = 5-phospho-alpha-D-ribose 1-diphosphate + anthranilate. It participates in amino-acid biosynthesis; L-tryptophan biosynthesis; L-tryptophan from chorismate: step 2/5. Catalyzes the transfer of the phosphoribosyl group of 5-phosphorylribose-1-pyrophosphate (PRPP) to anthranilate to yield N-(5'-phosphoribosyl)-anthranilate (PRA). The protein is Anthranilate phosphoribosyltransferase of Francisella tularensis subsp. holarctica (strain OSU18).